The primary structure comprises 99 residues: Gibberellin-regulated protein 2 (99 aa).

The N-terminal stretch at 1–26 (MAVFRSTLVLLLIIVCLTTYELHVHA) is a signal peptide.

It belongs to the GASA family. Post-translationally, six disulfide bonds may be present. In terms of tissue distribution, dry seeds and maturating siliques.

It is found in the secreted. Its function is as follows. Gibberellin-regulated protein that may function in hormonal controlled steps of development such as seed germination, flowering and seed maturation. In Arabidopsis thaliana (Mouse-ear cress), this protein is Gibberellin-regulated protein 2 (GASA2).